The following is a 277-amino-acid chain: 3-methyl-2-oxobutanoate hydroxymethyltransferase (277 aa).

Positions 43 and 82 each coordinate Mg(2+). 3-methyl-2-oxobutanoate contacts are provided by residues 43 to 44 (DS), aspartate 82, and lysine 112. Glutamate 114 lines the Mg(2+) pocket. Glutamate 181 acts as the Proton acceptor in catalysis.

This sequence belongs to the PanB family. As to quaternary structure, homodecamer; pentamer of dimers. Mg(2+) serves as cofactor.

It is found in the cytoplasm. The catalysed reaction is 3-methyl-2-oxobutanoate + (6R)-5,10-methylene-5,6,7,8-tetrahydrofolate + H2O = 2-dehydropantoate + (6S)-5,6,7,8-tetrahydrofolate. It functions in the pathway cofactor biosynthesis; (R)-pantothenate biosynthesis; (R)-pantoate from 3-methyl-2-oxobutanoate: step 1/2. Catalyzes the reversible reaction in which hydroxymethyl group from 5,10-methylenetetrahydrofolate is transferred onto alpha-ketoisovalerate to form ketopantoate. This Listeria monocytogenes serotype 4b (strain CLIP80459) protein is 3-methyl-2-oxobutanoate hydroxymethyltransferase.